A 286-amino-acid chain; its full sequence is MGDSRETHGLNAFVTGYPVKHSRSPLIHGYWLRTLNLAGSYRAVEVTPDDFPAFIAALKDRSSGFVGGNVTIPHKEIAFKLADRPDELSEELGASNTLWLEDGLLHATNTDGRGFTANLDECHPGWDRTDRAVILGAGGASRAVIQAVRDRGVNEIHVVNRTVERAQELSDRFGAQVHAHPMAALGEVMRSAGLFVNTTSLGMENEVAPTIDFSPLAENAVVTDIVYVPLKTPLLAQAEEQGFATVDGLGMLLHQAAPGFETWFGKRPVVDEVLRALIIADMDKHR.

Residues serine 22–serine 24 and threonine 71 contribute to the shikimate site. The active-site Proton acceptor is lysine 75. Glutamate 87 contacts NADP(+). Residues asparagine 96 and aspartate 111 each coordinate shikimate. Residues glycine 136 to alanine 140, asparagine 160 to arginine 165, and isoleucine 225 contribute to the NADP(+) site. Position 227 (tyrosine 227) interacts with shikimate. An NADP(+)-binding site is contributed by glycine 248.

This sequence belongs to the shikimate dehydrogenase family. In terms of assembly, homodimer.

It catalyses the reaction shikimate + NADP(+) = 3-dehydroshikimate + NADPH + H(+). It functions in the pathway metabolic intermediate biosynthesis; chorismate biosynthesis; chorismate from D-erythrose 4-phosphate and phosphoenolpyruvate: step 4/7. Involved in the biosynthesis of the chorismate, which leads to the biosynthesis of aromatic amino acids. Catalyzes the reversible NADPH linked reduction of 3-dehydroshikimate (DHSA) to yield shikimate (SA). The protein is Shikimate dehydrogenase (NADP(+)) of Rhizobium rhizogenes (strain K84 / ATCC BAA-868) (Agrobacterium radiobacter).